Reading from the N-terminus, the 208-residue chain is Probable molybdenum cofactor guanylyltransferase (208 aa).

Residues 12-14, Lys-24, Asp-72, and Asp-101 contribute to the GTP site; that span reads IAG. Position 101 (Asp-101) interacts with Mg(2+).

This sequence belongs to the MobA family. Requires Mg(2+) as cofactor.

The protein resides in the cytoplasm. It catalyses the reaction Mo-molybdopterin + GTP + H(+) = Mo-molybdopterin guanine dinucleotide + diphosphate. In terms of biological role, transfers a GMP moiety from GTP to Mo-molybdopterin (Mo-MPT) cofactor (Moco or molybdenum cofactor) to form Mo-molybdopterin guanine dinucleotide (Mo-MGD) cofactor. The polypeptide is Probable molybdenum cofactor guanylyltransferase (Chloroflexus aggregans (strain MD-66 / DSM 9485)).